Consider the following 291-residue polypeptide: Protein US2 (291 aa).

Gly-2 carries the N-acetylglycine; by host; partial modification. Residues 251–270 form a disordered region; the sequence is PEVPDEQPTSPGRGPQETDP.

It belongs to the herpesviridae HHV-1 US2 protein family. As to quaternary structure, interacts with host KRT18.

Its subcellular location is the host cytoplasm. The protein localises to the host nucleus. This chain is Protein US2, found in Homo sapiens (Human).